Here is a 134-residue protein sequence, read N- to C-terminus: Large ribosomal subunit protein bL17 (134 aa).

The protein belongs to the bacterial ribosomal protein bL17 family. Part of the 50S ribosomal subunit. Contacts protein L32.

The chain is Large ribosomal subunit protein bL17 from Anaplasma marginale (strain Florida).